A 62-amino-acid polypeptide reads, in one-letter code: Large ribosomal subunit protein bL33 (62 aa).

Belongs to the bacterial ribosomal protein bL33 family.

The polypeptide is Large ribosomal subunit protein bL33 (Cyanothece sp. (strain PCC 7425 / ATCC 29141)).